Consider the following 341-residue polypeptide: Protein-glutamate methylesterase/protein-glutamine glutaminase 2 (341 aa).

One can recognise a Response regulatory domain in the interval K7–E120. D58 is modified (4-aspartylphosphate). A CheB-type methylesterase domain is found at V155–L341. Active-site residues include S161, H187, and D283.

It belongs to the CheB family. In terms of processing, phosphorylated by CheA. Phosphorylation of the N-terminal regulatory domain activates the methylesterase activity.

It is found in the cytoplasm. It catalyses the reaction [protein]-L-glutamate 5-O-methyl ester + H2O = L-glutamyl-[protein] + methanol + H(+). It carries out the reaction L-glutaminyl-[protein] + H2O = L-glutamyl-[protein] + NH4(+). In terms of biological role, involved in chemotaxis. Part of a chemotaxis signal transduction system that modulates chemotaxis in response to various stimuli. Catalyzes the demethylation of specific methylglutamate residues introduced into the chemoreceptors (methyl-accepting chemotaxis proteins or MCP) by CheR. Also mediates the irreversible deamidation of specific glutamine residues to glutamic acid. The polypeptide is Protein-glutamate methylesterase/protein-glutamine glutaminase 2 (Syntrophomonas wolfei subsp. wolfei (strain DSM 2245B / Goettingen)).